Consider the following 267-residue polypeptide: DNA repair protein RecO (267 aa).

The protein belongs to the RecO family.

Its function is as follows. Involved in DNA repair and RecF pathway recombination. The sequence is that of DNA repair protein RecO from Moorella thermoacetica (strain ATCC 39073 / JCM 9320).